The following is a 521-amino-acid chain: Bifunctional dihydrofolate reductase-thymidylate synthase (521 aa).

The DHFR domain occupies 17–194; that stretch reads NYQVVVAGTR…IRHSFVSFVR (178 aa). A substrate-binding site is contributed by V21. NADP(+)-binding positions include A23 and 29-35; that span reads GIGKDGV. Residue D43 coordinates substrate. NADP(+) is bound by residues 67–69 and 88–91; these read RKT and LTRS. Substrate is bound at residue I130. 131 to 138 is a binding site for NADP(+); sequence GGGQVLRE. T151 serves as a coordination point for substrate. The interval 197–521 is thymidylate synthase; that stretch reads KSVAETHESN…HQKIEMKMAV (325 aa). A dUMP-binding site is contributed by R258. The active site involves C403. Residues H404, 422–426, N434, and 464–466 each bind dUMP; these read QRSAD and HVY.

In the N-terminal section; belongs to the dihydrofolate reductase family. This sequence in the C-terminal section; belongs to the thymidylate synthase family.

The enzyme catalyses (6S)-5,6,7,8-tetrahydrofolate + NADP(+) = 7,8-dihydrofolate + NADPH + H(+). It catalyses the reaction dUMP + (6R)-5,10-methylene-5,6,7,8-tetrahydrofolate = 7,8-dihydrofolate + dTMP. It functions in the pathway cofactor biosynthesis; tetrahydrofolate biosynthesis; 5,6,7,8-tetrahydrofolate from 7,8-dihydrofolate: step 1/1. Functionally, bifunctional enzyme. Involved in de novo dTMP biosynthesis. Key enzyme in folate metabolism. Can play two different roles depending on the source of dihydrofolate: de novo synthesis of tetrahydrofolate or recycling of the dihydrofolate released as one of the end products of the TS catalyzed reaction. Catalyzes an essential reaction for de novo glycine and purine synthesis, DNA precursor synthesis, and for the conversion of dUMP to dTMP. This Zea mays (Maize) protein is Bifunctional dihydrofolate reductase-thymidylate synthase (DRTS).